Here is a 395-residue protein sequence, read N- to C-terminus: MHC class I-like protein MILL1 (395 aa).

The first 32 residues, 1–32 (MLLSRNLRALAAIHLWIVYLLLEDLLGTCAEG), serve as a signal peptide directing secretion. The tract at residues 57–148 (AVAEPHTLRY…ITAQNGQNTD (92 aa)) is alpha-1. N98, N163, and N199 each carry an N-linked (GlcNAc...) asparagine glycan. The interval 149–240 (LHILQATFGC…SLRNGLLNTG (92 aa)) is alpha-2. Cystine bridges form between C158/C221 and C260/C317. The segment at 241 to 337 (FPKVIVTFRN…EPAATEAPVY (97 aa)) is alpha-3. In terms of domain architecture, Ig-like C1-type spans 242–333 (PKVIVTFRNY…HNINEPAATE (92 aa)). Residues 332–352 (TEAPVYGARREQPPTSGVGSR) are disordered. A connecting peptide region spans residues 338 to 368 (GARREQPPTSGVGSRVGKSLWSAMTTALVVI). A lipid anchor (GPI-anchor amidated serine) is attached at S369. A propeptide spans 370 to 395 (WTLSQKLMGPLLWFCSGGFCSFLQCW) (removed in mature form).

This sequence belongs to the MHC class I family. In terms of assembly, heterodimer with B2M. Post-translationally, N-glycosylated. As to expression, expressed in stomach, intestine, uterus, skeletal muscle and heart.

It localises to the cell membrane. The protein is MHC class I-like protein MILL1 of Mus musculus (Mouse).